A 589-amino-acid chain; its full sequence is Ubiquilin-1 (589 aa).

Over residues M1–P11 the composition is skewed to gly residues. 2 disordered regions span residues M1–K35 and N110–N145. An N-acetylalanine modification is found at A2. Positions G12–K35 are enriched in low complexity. A Ubiquitin-like domain is found at M37–R111. Over residues N110–G124 the composition is skewed to polar residues. The span at S125–N145 shows a compositional bias: low complexity. The segment at Q178 to P428 is interaction with UBXN4. STI1 domains lie at N182–M210 and N212–M251. Residues P295 to M371 are disordered. The segment covering L299 to R313 has biased composition (polar residues). The segment covering Q327–A360 has biased composition (low complexity). STI1 domains are found at residues N387 to M434 and L438 to L470. The disordered stretch occupies residues L488–P520. Residues G489–G499 show a composition bias toward gly residues. Polar residues predominate over residues E509–P520. Positions R546–S586 constitute a UBA domain.

Monomer and homodimer. Heterodimer with UBQLN2. Binds CD47, NBL1, GABRA1, GABRA2, GABRA3, GABRA6, GABRB1, GABRB2 and GABRB3. Binds UBE3A, BTRC, P4HB and MTOR. Interacts with the proteasome 19S subunit. Interacts (via ubiquitin-like domain) with TREX1; the interaction is direct and may control TREX1 subcellular location. Forms a complex with UBXN4 and VCP. Interacts (via UBA domain) with UBQLN4 (via ubiquitin-like domain). Found in a complex with UBQLN2 and MAP1LC3A/B/C. The monomeric form interacts with PSEN2. The monomeric form interacts with PSEN1. Interacts with ORAI1. Interacts (via UBA domain) with TICAM1. Interacts with EPS15. Interacts (via UBA domain) with UBA52 and (via ubiquitin-like domain) with PSMD3 and PSMD4. Interacts with HERPUD1. Interacts with MAP1LC3A/B/C in the presence of UBQLN4. Interacts (via ubiquitin-like domain) with EPS15 (via UIM domains) and both the ubiquitinated and non-ubiquitinated forms can interact with EPS15. Interacts (via ubiquitin-like domain) with EPS15L1, HGS (via UIM domain) and STAM2 (via UIM domain). Interacts with BCL2L10/BCL-B; in the cytoplasm. In terms of assembly, monomeric form interacts with PSEN1. Post-translationally, degraded during both macroautophagy and during chaperone-mediated autophagy (CMA). In terms of processing, phosphorylated. Ubiquitinated. In terms of tissue distribution, brain (at protein level). Ubiquitous. Highly expressed throughout the brain; detected in neurons and in neuropathological lesions, such as neurofibrillary tangles and Lewy bodies. Highly expressed in heart, placenta, pancreas, lung, liver, skeletal muscle and kidney.

It localises to the cytoplasm. The protein localises to the nucleus. It is found in the endoplasmic reticulum. The protein resides in the cytoplasmic vesicle. Its subcellular location is the autophagosome. It localises to the cell membrane. Plays an important role in the regulation of different protein degradation mechanisms and pathways including ubiquitin-proteasome system (UPS), autophagy and endoplasmic reticulum-associated protein degradation (ERAD) pathway. Mediates the proteasomal targeting of misfolded or accumulated proteins for degradation by binding (via UBA domain) to their polyubiquitin chains and by interacting (via ubiquitin-like domain) with the subunits of the proteasome. Plays a role in the ERAD pathway via its interaction with ER-localized proteins UBXN4, VCP and HERPUD1 and may form a link between the polyubiquitinated ERAD substrates and the proteasome. Involved in the regulation of macroautophagy and autophagosome formation; required for maturation of autophagy-related protein LC3 from the cytosolic form LC3-I to the membrane-bound form LC3-II and may assist in the maturation of autophagosomes to autolysosomes by mediating autophagosome-lysosome fusion. Negatively regulates the TICAM1/TRIF-dependent toll-like receptor signaling pathway by decreasing the abundance of TICAM1 via the autophagic pathway. Promotes the ubiquitination and lysosomal degradation of ORAI1, consequently down-regulating the ORAI1-mediated Ca2+ mobilization. Suppresses the maturation and proteasomal degradation of amyloid beta A4 protein (A4) by stimulating the lysine 63 (K63)-linked polyubiquitination. Delays the maturation of A4 by sequestering it in the Golgi apparatus and preventing its transport to the cell surface for subsequent processing. Ubiquitinates BCL2L10 and thereby stabilizes protein abundance. In terms of biological role, plays a role in unfolded protein response (UPR) by attenuating the induction of UPR-inducible genes, DDTI3/CHOP, HSPA5 and PDIA2 during ER stress. Plays a key role in the regulation of the levels of PSEN1 by targeting its accumulation to aggresomes which may then be removed from cells by autophagocytosis. Its function is as follows. Plays a role in unfolded protein response (UPR) by attenuating the induction of UPR-inducible genes, DDTI3/CHOP, HSPA5 and PDIA2 during ER stress. The polypeptide is Ubiquilin-1 (UBQLN1) (Homo sapiens (Human)).